The following is a 321-amino-acid chain: Tetraacyldisaccharide 4'-kinase (321 aa).

54-61 (SVGGTGKT) contacts ATP.

This sequence belongs to the LpxK family.

The catalysed reaction is a lipid A disaccharide + ATP = a lipid IVA + ADP + H(+). The protein operates within glycolipid biosynthesis; lipid IV(A) biosynthesis; lipid IV(A) from (3R)-3-hydroxytetradecanoyl-[acyl-carrier-protein] and UDP-N-acetyl-alpha-D-glucosamine: step 6/6. Its function is as follows. Transfers the gamma-phosphate of ATP to the 4'-position of a tetraacyldisaccharide 1-phosphate intermediate (termed DS-1-P) to form tetraacyldisaccharide 1,4'-bis-phosphate (lipid IVA). This Rickettsia africae (strain ESF-5) protein is Tetraacyldisaccharide 4'-kinase.